A 58-amino-acid polypeptide reads, in one-letter code: Ribulose bisphosphate carboxylase large chain (58 aa).

Residues 1 to 2 (MS) constitute a propeptide that is removed on maturation. Pro3 is subject to N-acetylproline. At Lys14 the chain carries N6,N6,N6-trimethyllysine.

The protein belongs to the RuBisCO large chain family. Type I subfamily. In terms of assembly, heterohexadecamer of 8 large chains and 8 small chains.

The protein localises to the plastid. It localises to the chloroplast. It carries out the reaction 2 (2R)-3-phosphoglycerate + 2 H(+) = D-ribulose 1,5-bisphosphate + CO2 + H2O. The enzyme catalyses D-ribulose 1,5-bisphosphate + O2 = 2-phosphoglycolate + (2R)-3-phosphoglycerate + 2 H(+). RuBisCO catalyzes two reactions: the carboxylation of D-ribulose 1,5-bisphosphate, the primary event in carbon dioxide fixation, as well as the oxidative fragmentation of the pentose substrate in the photorespiration process. Both reactions occur simultaneously and in competition at the same active site. This chain is Ribulose bisphosphate carboxylase large chain (rbcL), found in Euphorbia characias (Albanian spurge).